Here is a 199-residue protein sequence, read N- to C-terminus: Large ribosomal subunit protein bL25 (199 aa).

Belongs to the bacterial ribosomal protein bL25 family. CTC subfamily. As to quaternary structure, part of the 50S ribosomal subunit; part of the 5S rRNA/L5/L18/L25 subcomplex. Contacts the 5S rRNA. Binds to the 5S rRNA independently of L5 and L18.

This is one of the proteins that binds to the 5S RNA in the ribosome where it forms part of the central protuberance. In Chloroherpeton thalassium (strain ATCC 35110 / GB-78), this protein is Large ribosomal subunit protein bL25.